The sequence spans 540 residues: NEDD8-activating enzyme E1 regulatory subunit AXR1 (540 aa).

Belongs to the ubiquitin-activating E1 family. ULA1 subfamily. In terms of assembly, heterodimer of ECR1 and AXR1. The complex binds to RUB1/NEDD8 and RCE1. In terms of tissue distribution, expressed in shoot, root and floral meristems, in vascular tissues of cotyledons and mature leaves, and in the stele of the root. Expressed at higher levels on the lower side of an emerging root during germination and at higher levels on the underside of the apical hook.

The protein resides in the nucleus. Its pathway is protein modification; protein neddylation. Its function is as follows. Regulatory subunit of the dimeric ECR1-AXR1 E1 enzyme. E1 activates RUB1/NEDD8 by first adenylating its C-terminal glycine residue with ATP, thereafter linking this residue to the side chain of the catalytic cysteine, yielding a RUB1-ECR1 thioester and free AMP. E1 finally transfers RUB1 to the catalytic cysteine of RCE1. Plays an important role in auxin response. Regulates the chromosomal localization of meiotic recombination by crossovers (COs) and subsequent synapsis, probably through the activation of a CRL4 complex. Required for E3-mediated protein degradation in response to auxin, jasmonic acid and cold stress. Required for the COP1-COP10-CSN-mediated repression of photomorphogenesis in the dark. May function redundantly with AXL1 in the RUB conjugating pathway. Seems not to be functionally equivalent to AXL1 in vivo. The sequence is that of NEDD8-activating enzyme E1 regulatory subunit AXR1 from Arabidopsis thaliana (Mouse-ear cress).